Here is a 442-residue protein sequence, read N- to C-terminus: Glutamyl-tRNA(Gln) amidotransferase subunit D (442 aa).

The disordered stretch occupies residues 63-84; sequence TQTDIGSSAGAGADTEADKTES. An Asparaginase/glutaminase domain is found at 102-429; it reads PTVSLISTGG…PDPTNAMRKS (328 aa). Active-site residues include threonine 112, threonine 188, aspartate 189, and lysine 265.

It belongs to the asparaginase 1 family. GatD subfamily. Heterodimer of GatD and GatE.

It catalyses the reaction L-glutamyl-tRNA(Gln) + L-glutamine + ATP + H2O = L-glutaminyl-tRNA(Gln) + L-glutamate + ADP + phosphate + H(+). Functionally, allows the formation of correctly charged Gln-tRNA(Gln) through the transamidation of misacylated Glu-tRNA(Gln) in organisms which lack glutaminyl-tRNA synthetase. The reaction takes place in the presence of glutamine and ATP through an activated gamma-phospho-Glu-tRNA(Gln). The GatDE system is specific for glutamate and does not act on aspartate. The chain is Glutamyl-tRNA(Gln) amidotransferase subunit D from Haloquadratum walsbyi (strain DSM 16790 / HBSQ001).